The chain runs to 287 residues: MSVQLTPHFGNVQAHYDLSDDFFRLFLDPTQTYSCAYFERDDMTLQEAQIAKIDLALGKLNLEPGMTLLDIGCGWGATMRRAIEKYDVNVVGLTLSENQAGHVQKMFDQMDTPRSRRVLLEGWEKFDEPVDRIVSIGAFEHFGHQRYHHFFEVTHRTLPADGKMLLHTIVRPTFKEGREKGLTLTHELVHFTKFILAEIFPGGWLPSIPTVHEYAEKVGFRVTAVQSLQLHYARTLDMWATALEANKDQAIAIQSQTVYDRYMKYLTGCAKLFRQGYTDVDQFTLEK.

Residues 33–34, 68–76, 94–99, and 123–124 contribute to the S-adenosyl-L-methionine site; these read YS, LLDIGCGWG, TLSENQ, and WE. The active site involves Cys269.

Belongs to the CFA/CMAS family. In terms of assembly, homodimer.

It is found in the cytoplasm. It catalyses the reaction a 1-acyl-2-(9Z)-enoyl-sn-glycero-3-phospholipid + S-adenosyl-L-methionine = a 1-acyl-2-(9-cyclopronane)-acyl-sn-glycero-3-phospholipid + S-adenosyl-L-homocysteine + H(+). It functions in the pathway lipid metabolism; mycolic acid biosynthesis. Functionally, involved in the phagosome maturation block (PMB). Catalyzes the conversion of a double bond to a cyclopropane ring at the proximal position of an alpha mycolic acid via the transfer of a methylene group from S-adenosyl-L-methionine. It can use cis, cis 11,14-eicosadienoic acid and linoelaidic acid as substrate. Cyclopropanated mycolic acids are key factors participating in cell envelope permeability, host immunomodulation and persistence. In Mycobacterium tuberculosis (strain CDC 1551 / Oshkosh), this protein is Cyclopropane mycolic acid synthase 3 (pcaA).